A 184-amino-acid chain; its full sequence is Cytidylate kinase (184 aa).

8 to 16 (GQPGSGKTT) contributes to the ATP binding site.

Belongs to the cytidylate kinase family. Type 2 subfamily.

It localises to the cytoplasm. The catalysed reaction is CMP + ATP = CDP + ADP. It catalyses the reaction dCMP + ATP = dCDP + ADP. In Pyrobaculum islandicum (strain DSM 4184 / JCM 9189 / GEO3), this protein is Cytidylate kinase.